The chain runs to 137 residues: Small ribosomal subunit protein uS11 (137 aa).

Positions 116 to 137 (EDVTPVPSDSTRKKGGRRGRRL) are disordered. The span at 128 to 137 (KKGGRRGRRL) shows a compositional bias: basic residues.

It belongs to the universal ribosomal protein uS11 family.

This chain is Small ribosomal subunit protein uS11 (RPS14), found in Kluyveromyces lactis (strain ATCC 8585 / CBS 2359 / DSM 70799 / NBRC 1267 / NRRL Y-1140 / WM37) (Yeast).